The following is a 339-amino-acid chain: Very-long-chain 3-oxoacyl-CoA reductase (339 aa).

The helical transmembrane segment at 21–41 (WTTFLLALGSFNALRIIYQTL) threads the bilayer. Positions 67, 96, 121, 148, 215, 219, 248, and 250 each coordinate NADP(+). Residue tyrosine 215 is the Proton acceptor of the active site. Lysine 219 (lowers pKa of active site Tyr) is an active-site residue.

The protein belongs to the short-chain dehydrogenases/reductases (SDR) family.

It localises to the endoplasmic reticulum membrane. The enzyme catalyses a very-long-chain (3R)-3-hydroxyacyl-CoA + NADP(+) = a very-long-chain 3-oxoacyl-CoA + NADPH + H(+). It participates in lipid metabolism; fatty acid biosynthesis. In terms of biological role, component of the microsomal membrane bound fatty acid elongation system, which produces the 26-carbon very long-chain fatty acids (VLCFA) from palmitate. Catalyzes the reduction of the 3-ketoacyl-CoA intermediate that is formed in each cycle of fatty acid elongation. VLCFAs serve as precursors for ceramide and sphingolipids. In Coprinopsis cinerea (strain Okayama-7 / 130 / ATCC MYA-4618 / FGSC 9003) (Inky cap fungus), this protein is Very-long-chain 3-oxoacyl-CoA reductase.